Reading from the N-terminus, the 152-residue chain is Cytochrome c-type biogenesis protein CcmE (152 aa).

The Cytoplasmic segment spans residues 1 to 9 (MRGLKKQRR). A helical; Signal-anchor for type II membrane protein membrane pass occupies residues 10–30 (IQILIVAAVALTLSSVLIGYA). The Periplasmic segment spans residues 31-152 (LRDGINFFRP…PDGYARDGDS (122 aa)). His-123 and Tyr-127 together coordinate heme.

Belongs to the CcmE/CycJ family.

The protein localises to the cell inner membrane. In terms of biological role, heme chaperone required for the biogenesis of c-type cytochromes. Transiently binds heme delivered by CcmC and transfers the heme to apo-cytochromes in a process facilitated by CcmF and CcmH. This chain is Cytochrome c-type biogenesis protein CcmE, found in Jannaschia sp. (strain CCS1).